The following is a 179-amino-acid chain: Peptidyl-tRNA hydrolase (179 aa).

Tyr-14 serves as a coordination point for tRNA. His-19 functions as the Proton acceptor in the catalytic mechanism. TRNA is bound by residues Tyr-60, Asn-62, and Asn-108.

It belongs to the PTH family. In terms of assembly, monomer.

The protein resides in the cytoplasm. It catalyses the reaction an N-acyl-L-alpha-aminoacyl-tRNA + H2O = an N-acyl-L-amino acid + a tRNA + H(+). Its function is as follows. Hydrolyzes ribosome-free peptidyl-tRNAs (with 1 or more amino acids incorporated), which drop off the ribosome during protein synthesis, or as a result of ribosome stalling. In terms of biological role, catalyzes the release of premature peptidyl moieties from peptidyl-tRNA molecules trapped in stalled 50S ribosomal subunits, and thus maintains levels of free tRNAs and 50S ribosomes. The chain is Peptidyl-tRNA hydrolase from Mycoplasma mobile (strain ATCC 43663 / 163K / NCTC 11711) (Mesomycoplasma mobile).